The following is a 546-amino-acid chain: ATP synthase F(1) complex catalytic subunit beta, mitochondrial (546 aa).

A mitochondrion-targeting transit peptide spans 1-45 (MLGFVGRVAATSASGALRGLGPSPLPQVKVLLRASPAALQSARDY). N6-acetyllysine; alternate occurs at positions 123, 132, and 160. An N6-succinyllysine; alternate mark is found at K123, K132, and K160. An N6-acetyllysine modification is found at K197. Residues G208, V209, G210, K211, T212, and V213 each contribute to the ADP site. Residue G208 participates in ATP binding. Residues G208, V209, G210, K211, and T212 each contribute to the phosphate site. Positions 210, 211, 212, and 213 each coordinate ATP. T212 contacts Mg(2+). Position 237 (E237) interacts with Mg(2+). R238 provides a ligand contact to ATP. N6-acetyllysine; alternate is present on residues K258 and K263. N6-succinyllysine; alternate occurs at positions 258 and 263. Residue T311 is modified to Phosphothreonine. N6-acetyllysine is present on K425. S432 is modified (phosphoserine). N6-acetyllysine occurs at positions 479 and 484. An N6-acetyllysine; alternate modification is found at K521. Residue K521 is modified to N6-succinyllysine; alternate. Positions 521–546 (KLAEEHSATQTSPSPKGAAAXXXRVV) are disordered.

Belongs to the ATPase alpha/beta chains family. In terms of assembly, homotrimer. Component of the ATP synthase complex composed at least of ATP5F1A/subunit alpha, ATP5F1B/subunit beta, ATP5MC1/subunit c (homooctomer), MT-ATP6/subunit a, MT-ATP8/subunit 8, ATP5ME/subunit e, ATP5MF/subunit f, ATP5MG/subunit g, ATP5MK/subunit k, ATP5MJ/subunit j, ATP5F1C/subunit gamma, ATP5F1D/subunit delta, ATP5F1E/subunit epsilon, ATP5PF/subunit F6, ATP5PB/subunit b, ATP5PD/subunit d, ATP5PO/subunit OSCP. ATP synthase complex consists of a soluble F(1) head domain (subunits alpha(3) and beta(3)) - the catalytic core - and a membrane F(0) domain - the membrane proton channel (subunits c, a, 8, e, f, g, k and j). These two domains are linked by a central stalk (subunits gamma, delta, and epsilon) rotating inside the F1 region and a stationary peripheral stalk (subunits F6, b, d, and OSCP). Interacts with PPIF. Interacts with BCL2L1 isoform BCL-X(L); the interaction mediates the association of BCL2L1 isoform BCL-X(L) with the mitochondrial membrane F(1)F(0) ATP synthase and enhances neurons metabolic efficiency. Interacts with CLN5 and PPT1. Interacts with S100A1; this interaction increases F1-ATPase activity. Interacts with MTLN. Interacts with TTC5/STRAP; the interaction results in decreased mitochondrial ATP production.

The protein localises to the mitochondrion inner membrane. The enzyme catalyses ATP + H2O + 4 H(+)(in) = ADP + phosphate + 5 H(+)(out). In terms of biological role, catalytic subunit beta, of the mitochondrial membrane ATP synthase complex (F(1)F(0) ATP synthase or Complex V) that produces ATP from ADP in the presence of a proton gradient across the membrane which is generated by electron transport complexes of the respiratory chain. ATP synthase complex consist of a soluble F(1) head domain - the catalytic core - and a membrane F(1) domain - the membrane proton channel. These two domains are linked by a central stalk rotating inside the F(1) region and a stationary peripheral stalk. During catalysis, ATP synthesis in the catalytic domain of F(1) is coupled via a rotary mechanism of the central stalk subunits to proton translocation. In vivo, can only synthesize ATP although its ATP hydrolase activity can be activated artificially in vitro. With the subunit alpha (ATP5F1A), forms the catalytic core in the F(1) domain. This Canis lupus familiaris (Dog) protein is ATP synthase F(1) complex catalytic subunit beta, mitochondrial.